The following is a 70-amino-acid chain: uncharacterized protein (70 aa).

Its subcellular location is the plastid. The protein localises to the chloroplast. This is an uncharacterized protein from Mesostigma viride (Green alga).